Consider the following 114-residue polypeptide: MHELGITQNIVAIVLEQARGASVKRVTLEIGKLSAIMPEAIRFCFDICCQDTLLEGVTLEIIETEGKGKCRHCGHEIRLSQPFGQCDRCDSFELDIIQGQELQIKEMEVEELCV.

Residue H2 coordinates Ni(2+). Zn(2+) contacts are provided by C70, C73, C86, and C89.

It belongs to the HypA/HybF family.

In terms of biological role, involved in the maturation of [NiFe] hydrogenases. Required for nickel insertion into the metal center of the hydrogenase. The sequence is that of Hydrogenase maturation factor HypA from Crocosphaera subtropica (strain ATCC 51142 / BH68) (Cyanothece sp. (strain ATCC 51142)).